A 124-amino-acid polypeptide reads, in one-letter code: S-adenosylmethionine decarboxylase proenzyme (124 aa).

Ser63 acts as the Schiff-base intermediate with substrate; via pyruvic acid in catalysis. Position 63 is a pyruvic acid (Ser); by autocatalysis (Ser63). The Proton acceptor; for processing activity role is filled by His68. Cys83 acts as the Proton donor; for catalytic activity in catalysis.

Belongs to the prokaryotic AdoMetDC family. Type 1 subfamily. As to quaternary structure, heterotetramer of two alpha and two beta chains arranged as a dimer of alpha/beta heterodimers. It depends on pyruvate as a cofactor. Is synthesized initially as an inactive proenzyme. Formation of the active enzyme involves a self-maturation process in which the active site pyruvoyl group is generated from an internal serine residue via an autocatalytic post-translational modification. Two non-identical subunits are generated from the proenzyme in this reaction, and the pyruvate is formed at the N-terminus of the alpha chain, which is derived from the carboxyl end of the proenzyme. The post-translation cleavage follows an unusual pathway, termed non-hydrolytic serinolysis, in which the side chain hydroxyl group of the serine supplies its oxygen atom to form the C-terminus of the beta chain, while the remainder of the serine residue undergoes an oxidative deamination to produce ammonia and the pyruvoyl group blocking the N-terminus of the alpha chain.

It carries out the reaction S-adenosyl-L-methionine + H(+) = S-adenosyl 3-(methylsulfanyl)propylamine + CO2. It functions in the pathway amine and polyamine biosynthesis; S-adenosylmethioninamine biosynthesis; S-adenosylmethioninamine from S-adenosyl-L-methionine: step 1/1. Catalyzes the decarboxylation of S-adenosylmethionine to S-adenosylmethioninamine (dcAdoMet), the propylamine donor required for the synthesis of the polyamines spermine and spermidine from the diamine putrescine. The polypeptide is S-adenosylmethionine decarboxylase proenzyme (Geobacillus sp. (strain WCH70)).